Here is a 735-residue protein sequence, read N- to C-terminus: MDLLSNLRRSSIVLNRFYVKSLSQSDLTAYEYRCIFKKTPELGDEKRLLASICYKLGAIAVRIGSNIITKEAVRPEKLQGHDWQLVQMGTKQLDCRNDAHRCALETFERKFLERDLSASSQTEVRKAAEGGLIWWVVGAKGIEKSGNGWEVHRGRRIDVSLDAEGNLYLEIDIHHRFYTPWTVHQWLEQYPEIPLSYVRNNYLDERHGFINWQYGRFTQERPQDILLDCLGMSLAEYHLNKGATEEEVQQSYVVYVKPISWRKGKLTAHLSRRLSPSLTMEMLAKVAEDSTVCDREKREIRAVFKSIKQSINQRLQEAQKTASWILTKTYGISSPAIALSCDGYLLPAAKLLAANKQPVSKTADIRNKGCAKIGETSFGYLNLYNNQLQYPLEVHKCLLEIANKNNLQLSLDQRRVLSDYPQDDLDQQMFWQTWSSQGIKTVLVVMPWDSHHDKQKIRIQAIQAGIATQFMVPLPKADKYKALNVTLGLLCKAGWQPIQLESVDHPEVADLIIGFDTGTNRELYYGTSAFAVLADGQSLGWELPAVQRGETFSGQAIWQTVSKLIIKFYQICQRYPQKLLLMRDGLVQEGEFQQTIELLKERKIAVDVISVRKSGAGRMGQEIYENGQLVYRDAAIGSVILQPAERSFIMVTSQPVSKTIGSIRPLRIVHEYGSTDLELLALQTYHLTQLHPASGFRSCRLPWVLHLADRSSKEFQRIGQISVLQNISRDKLIAV.

Residues M1–D94 form an N-terminal domain region. The interval C95–P180 is linker L1. The PAZ domain stretch occupies residues W181–A284. The linker L2 stretch occupies residues K285–G369. Residues C370–I498 form a mid domain region. A PIWI domain region spans residues Q499–V735. Active-site residues include D516, E550, D584, and D709. D516 lines the Mn(2+) pocket. Residues D584, D709, and V735 each coordinate Mn(2+).

It belongs to the argonaute family. Long pAgo subfamily. Copurifies with SSB proteins Synpcc7942_0079 and Synpcc7942_0301 as well as other proteins. Requires Mn(2+) as cofactor.

A DNA-guided ssDNA endonuclease that might play a role in defense against invading mobile genetic elements. Uses short ssDNA sequences as guides (gDNA) to bind complementary target strands, resulting in cleavage of the target DNA (tDNA). The cleavage site is 10 nucleotides (nt) downstream of the target residue base-paired with the 5'-end of the gDNA. Both 5'-P and 5'-OH gDNAs confer activity; a 5'-OH guide cleaves between nt 10-11 and nt 11-12. Guide DNA mismatches in the seed (nt 2-9) can enhance activity, mismatches 1-5 nt after the cleavage site block activity. Has no appreciable activity with guide RNA or on target RNA. In situ binds to 5'-phosphorylated DNA 14-20 nt in length; small DNA maps over the chromosome and plasmid with some preference for the replication origin and the probable termination site. Also has weak guide-independent nuclease activity on DNA called 'chopping'. Overexpression of wild-type or catalytically inactive mutant has no visible effect during growth under continuous high light for up to a month. The polypeptide is Protein argonaute (Synechococcus elongatus (strain ATCC 33912 / PCC 7942 / FACHB-805) (Anacystis nidulans R2)).